The sequence spans 235 residues: Ribonuclease PH (235 aa).

Phosphate contacts are provided by residues Arg86 and 124–126; that span reads GTR.

This sequence belongs to the RNase PH family. In terms of assembly, homohexameric ring arranged as a trimer of dimers.

It catalyses the reaction tRNA(n+1) + phosphate = tRNA(n) + a ribonucleoside 5'-diphosphate. Phosphorolytic 3'-5' exoribonuclease that plays an important role in tRNA 3'-end maturation. Removes nucleotide residues following the 3'-CCA terminus of tRNAs; can also add nucleotides to the ends of RNA molecules by using nucleoside diphosphates as substrates, but this may not be physiologically important. Probably plays a role in initiation of 16S rRNA degradation (leading to ribosome degradation) during starvation. This is Ribonuclease PH from Francisella tularensis subsp. tularensis (strain FSC 198).